The chain runs to 247 residues: Adenosylcobinamide-GDP ribazoletransferase (247 aa).

Helical transmembrane passes span 34-54 (IITFPLIGLLLGAISGLVFMV), 59-79 (CGVPLAALFSVLVLALMTGGF), 113-133 (GGLALIFVVLAKILVLSELAL), 138-158 (ILALLAAACAVSRGTAALLMY), and 194-214 (VLLPGMHGVAAMVVTMVAIFI).

It belongs to the CobS family. It depends on Mg(2+) as a cofactor.

The protein resides in the cell inner membrane. It catalyses the reaction alpha-ribazole + adenosylcob(III)inamide-GDP = adenosylcob(III)alamin + GMP + H(+). The enzyme catalyses alpha-ribazole 5'-phosphate + adenosylcob(III)inamide-GDP = adenosylcob(III)alamin 5'-phosphate + GMP + H(+). Its pathway is cofactor biosynthesis; adenosylcobalamin biosynthesis; adenosylcobalamin from cob(II)yrinate a,c-diamide: step 7/7. Joins adenosylcobinamide-GDP and alpha-ribazole to generate adenosylcobalamin (Ado-cobalamin). Also synthesizes adenosylcobalamin 5'-phosphate from adenosylcobinamide-GDP and alpha-ribazole 5'-phosphate. This chain is Adenosylcobinamide-GDP ribazoletransferase, found in Shigella boydii serotype 4 (strain Sb227).